A 391-amino-acid polypeptide reads, in one-letter code: Putative neutrophil cytosol factor 1B (391 aa).

The PX domain occupies 1–126 (MGDTFIRHIA…DFFKVRPDDL (126 aa)). 2 SH3 domains span residues 157–216 (IILQ…PLDS) and 227–286 (YAGE…KSGQ). A disordered region spans residues 286–391 (QDVSQAQRQI…STKRKLASAV (106 aa)). Phosphoserine occurs at positions 304 and 305. Residues 310–319 (HSIHQRSRKR) are compositionally biased toward basic residues. Residues Ser-321, Ser-329, Ser-346, and Ser-349 each carry the phosphoserine modification.

The protein resides in the cytoplasm. Functionally, may be required for activation of the latent NADPH oxidase (necessary for superoxide production). This chain is Putative neutrophil cytosol factor 1B (NCF1B), found in Homo sapiens (Human).